The primary structure comprises 695 residues: Pre-mRNA-splicing factor clf-1 (695 aa).

HAT repeat units lie at residues 52–84 (EYQG…WELE), 86–118 (KEFA…AEIK), 120–152 (RNIN…VMEM), 154–185 (GDIP…LEKR), 187–218 (GEFD…FEEE), 220–259 (GTSD…YEAR), 261–295 (REYE…FEKQ), 305–337 (VILT…LEES), 339–373 (GDVD…LFLF), 383–419 (KDIG…FEIR), 421–452 (GQLT…LEQK), 454–486 (YEFE…LERG), 488–522 (DDLE…FEEE), 524–555 (GEYE…FEIN), 578–616 (EAKA…FEKT), and 621–654 (EDIE…YIFP).

It belongs to the crooked-neck family. Associated with the spliceosome.

The protein resides in the nucleus. In terms of biological role, involved in pre-mRNA splicing and cell cycle progression. Required for the spliceosome assembly and initiation of the DNA replication. The sequence is that of Pre-mRNA-splicing factor clf-1 (clf-1) from Neurospora crassa (strain ATCC 24698 / 74-OR23-1A / CBS 708.71 / DSM 1257 / FGSC 987).